Reading from the N-terminus, the 185-residue chain is Threonylcarbamoyl-AMP synthase (185 aa).

The YrdC-like domain occupies 4–185; the sequence is SWRVQQAARE…LATGEVVRPG (182 aa).

It belongs to the SUA5 family. TsaC subfamily.

Its subcellular location is the cytoplasm. It carries out the reaction L-threonine + hydrogencarbonate + ATP = L-threonylcarbamoyladenylate + diphosphate + H2O. Functionally, required for the formation of a threonylcarbamoyl group on adenosine at position 37 (t(6)A37) in tRNAs that read codons beginning with adenine. Catalyzes the conversion of L-threonine, HCO(3)(-)/CO(2) and ATP to give threonylcarbamoyl-AMP (TC-AMP) as the acyladenylate intermediate, with the release of diphosphate. The chain is Threonylcarbamoyl-AMP synthase from Pseudomonas entomophila (strain L48).